A 306-amino-acid chain; its full sequence is MIKRLNNFFEKINIKPQTKNLINYTTYKIGNISKLFLIPKNIQEAENIFKAAIEEKITLFILGGGSNILVNDKEELDFPIIYTGHLNKIEVHDNKIVAECGANFENLCKIALNSSLSGLEFIYGLPGTLGGAVWMNARCFGNEISEILKKITFINDKGKTICKEFKKEDFKYKVSPFQNKNFFILKTELNLKKENKKIIEEKMNKNKQARINKGHYLFPSSGSTFKNNKSFLRPSGQIIEECKLKGLSVGGAEVSKYHGNFIININNATSNDIKSLIEKVKTEVYSKTGLLLEEEVLYIGFKNQKS.

One can recognise an FAD-binding PCMH-type domain in the interval 28–194 (KIGNISKLFL…LKTELNLKKE (167 aa)). The Proton donor role is filled by S223. Residue E295 is part of the active site.

The protein belongs to the MurB family. Requires FAD as cofactor.

It is found in the cytoplasm. It carries out the reaction UDP-N-acetyl-alpha-D-muramate + NADP(+) = UDP-N-acetyl-3-O-(1-carboxyvinyl)-alpha-D-glucosamine + NADPH + H(+). It functions in the pathway cell wall biogenesis; peptidoglycan biosynthesis. Cell wall formation. The polypeptide is UDP-N-acetylenolpyruvoylglucosamine reductase (Borrelia garinii subsp. bavariensis (strain ATCC BAA-2496 / DSM 23469 / PBi) (Borreliella bavariensis)).